Here is a 76-residue protein sequence, read N- to C-terminus: MSGLGIMVLTLLLLVSMATSHQDGRGKQATQRDAINVRRRRSITRTEACYEYCKEQNKTCCGISNGRPICVGGCIR.

A signal peptide spans 1–20 (MSGLGIMVLTLLLLVSMATS). Positions 21 to 45 (HQDGRGKQATQRDAINVRRRRSITR) are excised as a propeptide. Disulfide bonds link C49–C61, C53–C70, and C60–C74.

This sequence belongs to the conotoxin O3 superfamily. As to expression, expressed by the venom duct.

It is found in the secreted. This chain is Conotoxin VnMSGL-0112, found in Conus ventricosus (Mediterranean cone).